A 501-amino-acid polypeptide reads, in one-letter code: Envelope glycoprotein C homolog (501 aa).

The first 27 residues, 1-27, serve as a signal peptide directing secretion; sequence MLTPRVLRALGWTGLFFLLLSPSNVLG. The Virion surface segment spans residues 28-465; sequence ASLSRDLETP…DATPSARGTP (438 aa). N46 carries N-linked (GlcNAc...) asparagine; by host glycosylation. The interval 53 to 86 is disordered; the sequence is PLTEVPHAPSTESVSTNSESTNEHTITETTGKNA. The span at 62–72 shows a compositional bias: low complexity; the sequence is STESVSTNSES. N91, N100, N120, N212, N354, N400, and N429 each carry an N-linked (GlcNAc...) asparagine; by host glycan. One can recognise an Ig-like domain in the interval 258 to 356; the sequence is PASVDVLAPP…GDMISTTNAT (99 aa). The chain crosses the membrane as a helical span at residues 466–492; sequence MVITVTAVLGLAVILGMGIIMTALCLY. Residues 493–501 are Cytoplasmic-facing; it reads NSTRKNIRL.

It belongs to the herpesviridae glycoprotein C family.

The protein localises to the secreted. The protein resides in the host cell membrane. May play an immunoevasive role in the pathogenesis of Marek's disease. It is a candidate for causing the early-stage immunosuppression that occurs after MDHV infection. This chain is Envelope glycoprotein C homolog (gC), found in Gallus gallus (Chicken).